Reading from the N-terminus, the 401-residue chain is Patatin-like protein 4 (401 aa).

Residues 17–218 (LSLDGGGVRG…TANDPTLVGM (202 aa)) enclose the PNPLA domain. The GXGXXG motif lies at 21 to 26 (GGGVRG). A GXSXG motif is present at residues 60-64 (GTSTG). The active-site Nucleophile is Ser-62. Asp-205 functions as the Proton acceptor in the catalytic mechanism. The DGA/G signature appears at 205 to 207 (DGG).

This sequence belongs to the patatin family.

Its function is as follows. Possesses non-specific lipolytic acyl hydrolase (LAH) activity. Hydrolyzes phospholipids as well as galactolipids. May play a role in disease resistance. The polypeptide is Patatin-like protein 4 (PLP4) (Arabidopsis thaliana (Mouse-ear cress)).